The sequence spans 280 residues: Energy-coupling factor transporter ATP-binding protein EcfA (280 aa).

In terms of domain architecture, ABC transporter spans 5-240 (IDVKNLTYKY…DEMLKLTGLE (236 aa)). ATP is bound at residue 40 to 47 (GHNGSGKS).

Belongs to the ABC transporter superfamily. Energy-coupling factor EcfA family. As to quaternary structure, forms a stable energy-coupling factor (ECF) transporter complex composed of 2 membrane-embedded substrate-binding proteins (S component), 2 ATP-binding proteins (A component) and 2 transmembrane proteins (T component).

The protein localises to the cell membrane. Functionally, ATP-binding (A) component of a common energy-coupling factor (ECF) ABC-transporter complex. Unlike classic ABC transporters this ECF transporter provides the energy necessary to transport a number of different substrates. The protein is Energy-coupling factor transporter ATP-binding protein EcfA of Pediococcus pentosaceus (strain ATCC 25745 / CCUG 21536 / LMG 10740 / 183-1w).